We begin with the raw amino-acid sequence, 317 residues long: MVCPNSNPVVEKVCELYEQISRLENLSPSKDVNVLFTDLVHTCMPPNPIDVSKLCQKIQEIRSHLIKLCGQAEGLLESHFSKILSSYENPLQHLHIFPYFDNYIKLSLLEYNILTKNTTNIPKKIAFIGSGPLPLTSLVLATKHLKTTCFHNYDIDVDANFMASALVAADPDMSSRMTFHTADVMDVTCALKDYDVVFLAALVGMDKEDKVKVVDHLAKYMSPGATLMLRSAHGARAFLYPVLDPRDLRGFEVLSVYHPTDEVINSVIIARKLPVPSVPLLDGLGAYVLPSKCACAEIHAFNPLNKMNLVEEFALEE.

The protein belongs to the nicotianamine synthase (NAS)-like family. As to quaternary structure, homomultimer. As to expression, leaves and roots.

The catalysed reaction is 3 S-adenosyl-L-methionine = nicotianamine + 3 S-methyl-5'-thioadenosine + 3 H(+). Synthesizes nicotianamine, a polyamine that serves as a sensor for the physiological iron status within the plant, and/or might be involved in the transport of iron. The polypeptide is Nicotianamine synthase (CHLN) (Solanum lycopersicum (Tomato)).